We begin with the raw amino-acid sequence, 261 residues long: DNA oxidative demethylase ALKBH2 (261 aa).

The interval 1–57 (MDRFLVKGAQGGLLRKQEEQEPTGEEPAVLGGDKESTRKRPRREAPGNGGHSAGPSW) is disordered. Positions 3 to 7 (RFLVK) match the PCNA-binding motif. Substrate is bound by residues 102–104 (FGK) and 122–124 (YTF). Residues 152–257 (TFNFVLINRY…RVNLTFRKIL (106 aa)) enclose the Fe2OG dioxygenase domain. The 2-oxoglutarate site is built by N159, Y161, and H171. Fe cation contacts are provided by H171 and D173. D174 is a binding site for substrate. 2-oxoglutarate-binding residues include H236, R248, T252, and R254. Residue H236 participates in Fe cation binding.

Belongs to the alkB family. In terms of assembly, interacts with PCNA homotrimer; this interaction is enhanced during the S-phase of the cell cycle. Interacts with nucleolar proteins NCL, UBTF and NPM1. Interacts with XRCC5-XRCC6 heterodimer. It depends on Fe(2+) as a cofactor. As to expression, detected in colon, small intestine, ovary, testis, prostate, skeletal muscle, heart, liver and urinary bladder.

Its subcellular location is the nucleus. The protein localises to the nucleolus. It localises to the nucleoplasm. It carries out the reaction a methylated nucleobase within DNA + 2-oxoglutarate + O2 = a nucleobase within DNA + formaldehyde + succinate + CO2. It catalyses the reaction an N(1)-methyl-2'-deoxyadenosine in double-stranded DNA + 2-oxoglutarate + O2 = a 2'-deoxyadenosine in double-stranded DNA + formaldehyde + succinate + CO2 + H(+). The catalysed reaction is an N(1)-methyl-2'-deoxyadenosine in single-stranded DNA + 2-oxoglutarate + O2 = a 2'-deoxyadenosine in single-stranded DNA + formaldehyde + succinate + CO2 + H(+). The enzyme catalyses an N(3)-methyl-2'-deoxycytidine in double-stranded DNA + 2-oxoglutarate + O2 = a 2'-deoxycytidine in double-stranded DNA + formaldehyde + succinate + CO2 + H(+). It carries out the reaction an N(3)-methyl-2'-deoxycytidine in single-stranded DNA + 2-oxoglutarate + O2 = a 2'-deoxycytidine in single-stranded DNA + formaldehyde + succinate + CO2 + H(+). It catalyses the reaction a 1,N(6)-etheno-2'-deoxyadenosine in double-stranded DNA + 2-oxoglutarate + O2 + H2O = a 2'-deoxyadenosine in double-stranded DNA + glyoxal + succinate + CO2. The catalysed reaction is a 1,N(6)-etheno-2'-deoxyadenosine in single-stranded DNA + 2-oxoglutarate + O2 + H2O = a 2'-deoxyadenosine in single-stranded DNA + glyoxal + succinate + CO2. The enzyme catalyses a 3,N(4)-etheno-2'-deoxycytidine in double-stranded DNA + 2-oxoglutarate + O2 + H2O = a 2'-deoxycytidine in double-stranded DNA + glyoxal + succinate + CO2. It carries out the reaction a 3,N(4)-etheno-2'-deoxycytidine in single-stranded DNA + 2-oxoglutarate + O2 + H2O = a 2'-deoxycytidine in single-stranded DNA + glyoxal + succinate + CO2. It catalyses the reaction a 1,N(2)-etheno-2'-deoxyguanosine in double-stranded DNA + 2-oxoglutarate + O2 + H2O = a 2'-deoxyguanosine in double-stranded DNA + glyoxal + succinate + CO2. Its activity is regulated as follows. Activated by ascorbate and magnesium ions. In terms of biological role, dioxygenase that repairs alkylated nucleic acid bases by direct reversal oxidative dealkylation. Can process both double-stranded (ds) and single-stranded (ss) DNA substrates, with a strong preference for dsDNA. Uses molecular oxygen, 2-oxoglutarate and iron as cofactors to oxidize the alkyl groups that are subsequently released as aldehydes, regenerating the undamaged bases. Probes the base pair stability, locates a weakened base pair and flips the damaged base to accommodate the lesion in its active site for efficient catalysis. Repairs monoalkylated bases, specifically N1-methyladenine and N3-methylcytosine, as well as higher order alkyl adducts such as bases modified with exocyclic bridged adducts known as etheno adducts including 1,N6-ethenoadenine, 3,N4-ethenocytosine and 1,N2-ethenoguanine. Acts as a gatekeeper of genomic integrity under alkylation stress. Efficiently repairs alkylated lesions in ribosomal DNA (rDNA). These lesions can cause ss- and dsDNA strand breaks that severely impair rDNA transcription. In a response mechanism to DNA damage, associates with PCNA at replication forks to repair alkylated adducts prior to replication. This is DNA oxidative demethylase ALKBH2 (ALKBH2) from Homo sapiens (Human).